A 467-amino-acid chain; its full sequence is MSKVASIVDVLQGKVAIGETVTVRGWVRTRRDSKAGLSFLAVYDGSCFDPIQAIINNDIKNYESEILRLTTGCSVIVTGKVVESPSEGQAVELQAEKVEVTGFVEDPDTYPMAAKRHSIEYLREVAHLRPRTNIIGAVSRVRHCLSQAIHRFFHEQGFYWVATPLITASDTEGAGEMFRVSTLDLENLPRSENGKVDFSQDFFGKESFLTVSGQLNGETYACALSKIYTFGPTFRAENSNTTRHLAEFWMVEPEVAFATLADNAKLAEDMLKYVFRAVLAERKDDLQFFEKHVDKDVITRLENFVNSDFAQIDYTDAIDVLLKSGKKFEFPVSWGIDLSSEHERFLAEEYFKSPVVVKNYPKDIKAFYMRLNDDGKTVAAMDVLAPGIGEIIGGSQREERLEVLDKRMEEMGLNPDDYWWYRDLRKYGSVPHSGFGLGFERLIVYVTGVQNIRDVIPFPRAPRNANF.

Belongs to the class-II aminoacyl-tRNA synthetase family. In terms of assembly, homodimer.

Its subcellular location is the cytoplasm. The catalysed reaction is tRNA(Asn) + L-asparagine + ATP = L-asparaginyl-tRNA(Asn) + AMP + diphosphate + H(+). In Haemophilus influenzae (strain PittEE), this protein is Asparagine--tRNA ligase.